The following is a 392-amino-acid chain: Protein NolC (392 aa).

The J domain maps to 2 to 71; that stretch reads KRDLYETLGV…RAAYDRYGHA (70 aa). Disordered stretches follow at residues 103 to 142 and 157 to 244; these read RRDD…QDGA and LGRE…TGLR. Residues 157–170 show a composition bias toward basic and acidic residues; it reads LGREAGHQPEDLRH. Residues 171-185 are compositionally biased toward low complexity; the sequence is LPGLRPYPRRPGLLL. The span at 186 to 203 shows a compositional bias: basic and acidic residues; sequence DRTHLPDLRRSRSDDHRS. The segment covering 227-241 has biased composition (basic residues); the sequence is HRGRHAYPPLRRGRT.

This Rhizobium fredii (Sinorhizobium fredii) protein is Protein NolC (nolC).